The primary structure comprises 424 residues: Virion nicking-joining enzyme (424 aa).

This sequence belongs to the orthopoxvirus OPG042 family.

It is found in the virion. DNA nicking enzyme that cleaves extruded cruciform DNA at its tip. Probably nicks viral hairpins. The sequence is that of Virion nicking-joining enzyme (OPG042) from Cynomys gunnisoni (Gunnison's prairie dog).